The chain runs to 187 residues: Capsid protein (187 aa).

A disordered region spans residues 150–187 (RRGGARASRSPRRRTPSPRRRRSQSPRRRRSQSPSANC). The span at 158 to 180 (RSPRRRTPSPRRRRSQSPRRRRS) shows a compositional bias: basic residues. Serine 159, serine 166, and serine 174 each carry phosphoserine; by host. A 1; half-length repeat occupies 159 to 165 (SPRRRTP). The interval 159–181 (SPRRRTPSPRRRRSQSPRRRRSQ) is 3 X 8 AA repeats of S-P-R-R-R-[PR]-S-Q. Residues 162 to 179 (RRTPSPRRRRSQSPRRRR) carry the Bipartite nuclear localization signal motif. Repeat copies occupy residues 166–173 (SPRRRRSQ) and 174–181 (SPRRRRSQ). The segment at 181–187 (QSPSANC) is RNA binding.

Belongs to the orthohepadnavirus core antigen family. In terms of assembly, homodimerizes, then multimerizes. Interacts with cytosol exposed regions of viral L glycoprotein present in the reticulum-to-Golgi compartment. Interacts with human FLNB. Phosphorylated form interacts with host importin alpha; this interaction depends on the exposure of the NLS, which itself depends upon genome maturation and/or phosphorylation of the capsid protein. Interacts with host NUP153. Phosphorylated by host SRPK1, SRPK2, and maybe protein kinase C or GAPDH. Phosphorylation is critical for pregenomic RNA packaging. Protein kinase C phosphorylation is stimulated by HBx protein and may play a role in transport of the viral genome to the nucleus at the late step during the viral replication cycle.

It localises to the virion. The protein localises to the host cytoplasm. In terms of biological role, self assembles to form an icosahedral capsid. Most capsids appear to be large particles with an icosahedral symmetry of T=4 and consist of 240 copies of capsid protein, though a fraction forms smaller T=3 particles consisting of 180 capsid proteins. Entering capsids are transported along microtubules to the nucleus. Phosphorylation of the capsid is thought to induce exposure of nuclear localization signal in the C-terminal portion of the capsid protein that allows binding to the nuclear pore complex via the importin (karyopherin-) alpha and beta. Capsids are imported in intact form through the nuclear pore into the nuclear basket, where it probably binds NUP153. Only capsids that contain the mature viral genome can release the viral DNA and capsid protein into the nucleoplasm. Immature capsids get stuck in the basket. Capsids encapsulate the pre-genomic RNA and the P protein. Pre-genomic RNA is reverse-transcribed into DNA while the capsid is still in the cytoplasm. The capsid can then either be directed to the nucleus, providing more genomes for transcription, or bud through the endoplasmic reticulum to provide new virions. The sequence is that of Capsid protein from Marmota monax (Woodchuck).